Reading from the N-terminus, the 859-residue chain is Leucine--tRNA ligase (859 aa).

The 'HIGH' region signature appears at 42–52; the sequence is PYPSGRLHMGH. The 'KMSKS' region motif lies at 618–622; it reads KMSKS. An ATP-binding site is contributed by K621.

Belongs to the class-I aminoacyl-tRNA synthetase family.

Its subcellular location is the cytoplasm. The catalysed reaction is tRNA(Leu) + L-leucine + ATP = L-leucyl-tRNA(Leu) + AMP + diphosphate. The sequence is that of Leucine--tRNA ligase from Shewanella oneidensis (strain ATCC 700550 / JCM 31522 / CIP 106686 / LMG 19005 / NCIMB 14063 / MR-1).